Here is a 308-residue protein sequence, read N- to C-terminus: Olfactory receptor 8D1 (308 aa).

Topologically, residues 1–25 are extracellular; it reads MTMENYSMAAQFVLDGLTQQAELQL. N-linked (GlcNAc...) asparagine glycosylation occurs at Asn-5. The chain crosses the membrane as a helical span at residues 26 to 46; sequence PLFLLFLGIYVVTVVGNLGMI. At 47–54 the chain is on the cytoplasmic side; that stretch reads LLIAVSPL. A helical membrane pass occupies residues 55–75; it reads LHTPMYYFLSSLSFVDFCYSS. Over 76 to 99 the chain is Extracellular; it reads VITPKMLVNFLGKKNTILYSECMV. Cysteines 97 and 189 form a disulfide. The helical transmembrane segment at 100-120 threads the bilayer; that stretch reads QLFFFVVFVVAEGYLLTAMAY. The Cytoplasmic segment spans residues 121 to 139; sequence DRYVAICSPLLYNAIMSSW. Residues 140 to 160 form a helical membrane-spanning segment; sequence VCSLLVLAAFFLGFLSALTHT. The Extracellular segment spans residues 161–197; the sequence is SAMMKLSFCKSHIINHYFCDVLPLLNLSCSNTHLNEL. Residue Asn-186 is glycosylated (N-linked (GlcNAc...) asparagine). Residues 198–217 form a helical membrane-spanning segment; it reads LLFIIAGFNTLVPTLAVAVS. Topologically, residues 218–237 are cytoplasmic; that stretch reads YAFILYSILHIRSSEGRSKA. A helical transmembrane segment spans residues 238–258; it reads FGTCSSHLMAVVIFFGSITFM. The Extracellular portion of the chain corresponds to 259–271; that stretch reads YFKPPSSNSLDQE. A helical membrane pass occupies residues 272–292; the sequence is KVSSVFYTTVIPMLNPLIYSL. Residues 293-308 are Cytoplasmic-facing; sequence RNKDVKKALRKVLVGK.

It belongs to the G-protein coupled receptor 1 family. Expressed in the tongue.

Its subcellular location is the cell membrane. In terms of biological role, odorant receptor (Potential). May be involved in taste perception. The polypeptide is Olfactory receptor 8D1 (OR8D1) (Homo sapiens (Human)).